The following is a 387-amino-acid chain: Phosphoglycerate kinase (387 aa).

Residues 21-23 (DLN), arginine 36, 59-62 (HLGR), arginine 113, and arginine 146 contribute to the substrate site. Residues lysine 197, glutamate 314, and 340-343 (GGDT) contribute to the ATP site.

This sequence belongs to the phosphoglycerate kinase family. In terms of assembly, monomer.

It is found in the cytoplasm. It carries out the reaction (2R)-3-phosphoglycerate + ATP = (2R)-3-phospho-glyceroyl phosphate + ADP. It participates in carbohydrate degradation; glycolysis; pyruvate from D-glyceraldehyde 3-phosphate: step 2/5. This is Phosphoglycerate kinase from Pseudomonas fluorescens (strain Pf0-1).